A 372-amino-acid chain; its full sequence is DNA-directed RNA polymerase subunit alpha (372 aa).

The alpha N-terminal domain (alpha-NTD) stretch occupies residues 1-268; sequence MIFDEDSNSV…DQFQPFINFD (268 aa). The interval 280–372 is alpha C-terminal domain (alpha-CTD); the sequence is KDALPYDSNL…ESLSKQYSEE (93 aa).

Belongs to the RNA polymerase alpha chain family. Homodimer. The RNAP catalytic core consists of 2 alpha, 1 beta, 1 beta' and 1 omega subunit. When a sigma factor is associated with the core the holoenzyme is formed, which can initiate transcription.

It catalyses the reaction RNA(n) + a ribonucleoside 5'-triphosphate = RNA(n+1) + diphosphate. Functionally, DNA-dependent RNA polymerase catalyzes the transcription of DNA into RNA using the four ribonucleoside triphosphates as substrates. In Ehrlichia canis (strain Jake), this protein is DNA-directed RNA polymerase subunit alpha.